We begin with the raw amino-acid sequence, 511 residues long: MSEQTTTPEVDQTLDLNNEMQERRSKLAALRAQGNPFPNDFRRDSLSGDLHAEFGDKSADELAALGKRVKIAGRIMTRRIMGKASFATLQDMAGKIQVYVTRDDLPEGFYNEQFKKWDLGDIVGVEGTLFRTNTGELSVHVSDIRLLTKALRPLPEKHKGLTDQEARCRQRYLDLIANEESRKTFVTRTKVVAGIRKFLNDKRFMEVETPMMQVIPGGASARPFITHHNALDIDMYLRIAPELYLKRLVVGGFERVYEINRNFRNEGISVRHNPEFTMLEFYMAYADYIDLMDLTEEMLRTLAQDILGDTKIRYAKEGEEGLTIDFGQPFQRLSMVDSILKYNPDVTRDDLATLEKATAVAKRLHIELMKSWELGHVITAIFEETVEHMLLQPTFITEYPAAVSPLARRNDQNPDVTDRFEFFIGGRELANGFSELNDAEDQAERFQAQVDQKAAGDDEAMFYDADFVTALEHGLPPTAGQGIGIDRLVMLFTNSHTIRDVILFPALRPQK.

The Mg(2+) site is built by Glu421 and Glu428.

It belongs to the class-II aminoacyl-tRNA synthetase family. In terms of assembly, homodimer. The cofactor is Mg(2+).

Its subcellular location is the cytoplasm. It catalyses the reaction tRNA(Lys) + L-lysine + ATP = L-lysyl-tRNA(Lys) + AMP + diphosphate. This is Lysine--tRNA ligase from Aeromonas hydrophila subsp. hydrophila (strain ATCC 7966 / DSM 30187 / BCRC 13018 / CCUG 14551 / JCM 1027 / KCTC 2358 / NCIMB 9240 / NCTC 8049).